We begin with the raw amino-acid sequence, 590 residues long: Complement component C8 beta chain (590 aa).

The signal sequence occupies residues M1–S32. Residues E33–R54 constitute a propeptide that is removed on maturation. Residue N44 is glycosylated (N-linked (GlcNAc...) asparagine). Residues D64–R117 form the TSP type-1 1 domain. Disulfide bonds link C65-C100, C76-C110, C79-C116, C122-C133, C127-C146, C140-C155, and C162-C200. 2 C-linked (Man) tryptophan glycosylation sites follow: W70 and W73. An N-linked (GlcNAc...) asparagine glycan is attached at N101. One can recognise an LDL-receptor class A domain in the interval V120–K157. Residues L138, N141, D143, D145, D151, and E152 each coordinate Ca(2+). The MACPF domain maps to I158–R504. Transmembrane regions (beta stranded) follow at residues S252–K259, S262–N269, A379–G386, and V392–S399. C378 and C403 are joined by a disulfide. Residue T418 is modified to Phosphothreonine. 4 disulfides stabilise this stretch: C503–C550, C505–C521, C508–C523, and C525–C534. The EGF-like domain occupies C505 to E535. Positions D545–L588 constitute a TSP type-1 2 domain. C-linked (Man) tryptophan glycosylation is found at W551 and W554. C557 and C590 form a disulfide bridge. The disordered stretch occupies residues C557–C590.

This sequence belongs to the complement C6/C7/C8/C9 family. Heterotrimer of 3 chains: alpha (C8A), beta (C8B) and gamma (C8G); the alpha and gamma chains are disulfide bonded. Component of the membrane attack complex (MAC), composed of complement C5b, C6, C7, C8A, C8B, C8G and multiple copies of the pore-forming subunit C9. In terms of processing, N-glycosylated; contains one or two bound glycans. Not O-glycosylated.

It localises to the secreted. The protein localises to the target cell membrane. Its activity is regulated as follows. Membrane attack complex (MAC) assembly is inhibited by CD59, thereby protecting self-cells from damage during complement activation. CD59 acts by binding to the beta-haipins of C8 (C8A and C8B), forming an intermolecular beta-sheet that prevents incorporation of the multiple copies of C9 required for complete formation of the osmolytic pore. MAC assembly is also inhibited by clusterin (CLU) chaperones that inhibit polymerization of C9. Component of the membrane attack complex (MAC), a multiprotein complex activated by the complement cascade, which inserts into a target cell membrane and forms a pore, leading to target cell membrane rupture and cell lysis. The MAC is initiated by proteolytic cleavage of C5 into complement C5b in response to the classical, alternative, lectin and GZMK complement pathways. The complement pathways consist in a cascade of proteins that leads to phagocytosis and breakdown of pathogens and signaling that strengthens the adaptive immune system. C8B, together with C8A and C8G, inserts into the target membrane, but does not form pores by itself. During MAC assembly, associates with C5b, C6 and C7 to form the C5b8 intermediate complex that inserts into the target membrane and traverses the bilayer increasing membrane rigidity. This Oryctolagus cuniculus (Rabbit) protein is Complement component C8 beta chain (C8B).